We begin with the raw amino-acid sequence, 85 residues long: Inhibitor of dGTPase (85 aa).

As to quaternary structure, interacts with host dGTPase/dgt.

Plays a role in increasing the intracellular pool of dGTP. Interacts with and inhibits host dGTPase/dgt. The complex made of the host dGTPase and gene 1.2 protein creates a GTP-binding site of high affinity. Subsequent binding of GTP to the enzyme-inhibitor complex inhibits its dissociation. In Escherichia coli (Bacteriophage T7), this protein is Inhibitor of dGTPase.